We begin with the raw amino-acid sequence, 571 residues long: Isocitrate dehydrogenase kinase/phosphatase (571 aa).

Residues 318 to 324 (APGVRGM) and K339 each bind ATP. D374 is a catalytic residue.

This sequence belongs to the AceK family.

The protein localises to the cytoplasm. The catalysed reaction is L-seryl-[isocitrate dehydrogenase] + ATP = O-phospho-L-seryl-[isocitrate dehydrogenase] + ADP + H(+). In terms of biological role, bifunctional enzyme which can phosphorylate or dephosphorylate isocitrate dehydrogenase (IDH) on a specific serine residue. This is a regulatory mechanism which enables bacteria to bypass the Krebs cycle via the glyoxylate shunt in response to the source of carbon. When bacteria are grown on glucose, IDH is fully active and unphosphorylated, but when grown on acetate or ethanol, the activity of IDH declines drastically concomitant with its phosphorylation. In Pseudomonas putida (strain ATCC 700007 / DSM 6899 / JCM 31910 / BCRC 17059 / LMG 24140 / F1), this protein is Isocitrate dehydrogenase kinase/phosphatase.